A 333-amino-acid chain; its full sequence is Abequosyltransferase RfbV (333 aa).

The protein belongs to the glycosyltransferase 2 family.

It carries out the reaction CDP-alpha-D-abequose + alpha-D-Man-(1-&gt;4)-alpha-L-Rha-(1-&gt;3)-alpha-D-Gal-di-trans,octa-cis-undecaprenyl diphosphate = alpha-D-Abe-(1-&gt;3)-alpha-D-Man-(1-&gt;4)-alpha-L-Rha-(1-&gt;3)-alpha-D-Gal-di-trans,octa-cis-undecaprenyl diphosphate + CDP + H(+). Its pathway is bacterial outer membrane biogenesis; LPS O-antigen biosynthesis. Its function is as follows. Catalyzes the transfer of CDP-abequose on D-mannosyl-L-rhamnosyl-D-galactose-1-diphospholipid to yield D-abequosyl-D-mannosyl-rhamnosyl-D-galactose-1-diphospholipid. The protein is Abequosyltransferase RfbV (rfbV) of Salmonella typhimurium (strain LT2 / SGSC1412 / ATCC 700720).